A 911-amino-acid polypeptide reads, in one-letter code: Protein SOSEKI (911 aa).

Residues 15–107 (TKVQVVYYLS…LVLKGSELYT (93 aa)) are DIX-like oligomerization domain. 2 disordered regions span residues 219-470 (SETL…TQCE) and 492-810 (LCGN…PPRI). Basic and acidic residues-rich tracts occupy residues 253–286 (TDRE…EVSR) and 295–407 (EAPR…EELP). Residues 414–423 (SPTCSESGDS) are compositionally biased toward polar residues. The span at 452–467 (SSSTRSSTPSTSAAST) shows a compositional bias: low complexity. The short motif at 493 to 494 (CG) is the Association to cell membranes element. Positions 511 to 527 (PLAAAAQPASGAVPQSP) are enriched in low complexity. Positions 591 to 607 (SGVNSAMATPFLQTENN) are enriched in polar residues. Over residues 608–662 (SPSSSESSSAAVSSGKKPASISLSGTSDASDGGNGASSTASSSSEVQNNVSVKEV) the composition is skewed to low complexity. Over residues 663–683 (ITQQLPSPSSSEGRPSLNIDT) the composition is skewed to polar residues. Basic and acidic residues predominate over residues 696–709 (SDVRETVKTTRPDS). Residues 722–733 (PVRTQLSSSPSF) are compositionally biased toward polar residues. The span at 735 to 771 (KRIEDARARARSLVSKEIRSGESRSSKDLLKENDRVK) shows a compositional bias: basic and acidic residues. A compositionally biased stretch (low complexity) spans 772–784 (TSSGSMRSGSTRT). Polar residues predominate over residues 785–805 (PNNKNGTTGAGSKTLSGTFNR). The C2HC/C3H-type zinc-finger motif lies at 864-893 (ILQECGQCGRTFKPDSLKVHMRGCHALRRS). Residues C868, C871, H883, and C887 each coordinate Zn(2+).

The protein belongs to the SOSEKI family. As to quaternary structure, homodimer. Forms long polymer filaments with other SOKs proteins polymers crucial for polar localization and biological activity. It depends on Zn(2+) as a cofactor.

It is found in the cell membrane. Its function is as follows. SOSEKI proteins locally interpret global polarity cues and can influence cell division orientation to coordinate cell polarization relative to body axes. The sequence is that of Protein SOSEKI from Marchantia polymorpha (Common liverwort).